The sequence spans 257 residues: Probable septum site-determining protein MinC (257 aa).

It belongs to the MinC family. Interacts with MinD and FtsZ.

In terms of biological role, cell division inhibitor that blocks the formation of polar Z ring septums. Rapidly oscillates between the poles of the cell to destabilize FtsZ filaments that have formed before they mature into polar Z rings. Prevents FtsZ polymerization. This chain is Probable septum site-determining protein MinC, found in Burkholderia lata (strain ATCC 17760 / DSM 23089 / LMG 22485 / NCIMB 9086 / R18194 / 383).